Consider the following 163-residue polypeptide: MALNLQDKQAIVAEVNEAAKGALSAVIADSRGVTVDKMTELRKVARENGVSMRVVRNTLLRRAVEGTEFECLKDTFVGPTLIAFSTEHPGAAARLFKDFAKANDKFEIKGAAFEGKIQDVEFLATLPTYDEAIARLMGTMKEAAAGKLVRTLAALRDKLQEAA.

The protein belongs to the universal ribosomal protein uL10 family. Part of the ribosomal stalk of the 50S ribosomal subunit. The N-terminus interacts with L11 and the large rRNA to form the base of the stalk. The C-terminus forms an elongated spine to which L12 dimers bind in a sequential fashion forming a multimeric L10(L12)X complex.

In terms of biological role, forms part of the ribosomal stalk, playing a central role in the interaction of the ribosome with GTP-bound translation factors. This Pasteurella multocida (strain Pm70) protein is Large ribosomal subunit protein uL10 (rplJ).